Consider the following 186-residue polypeptide: Tumor necrosis factor alpha-induced protein 8-like protein 1 (186 aa).

The protein belongs to the TNFAIP8 family. As to quaternary structure, interacts with FBXW5; TNFAIP8L1 competes with TSC2 to bind FBXW5 increasing TSC2 stability by preventing its ubiquitination. High expression detected in most carcinoma cell lines, especially in cells transformed with virus genomes.

It is found in the cytoplasm. In terms of biological role, acts as a negative regulator of mTOR activity. The protein is Tumor necrosis factor alpha-induced protein 8-like protein 1 (TNFAIP8L1) of Homo sapiens (Human).